We begin with the raw amino-acid sequence, 67 residues long: Large ribosomal subunit protein bL35 (67 aa).

It belongs to the bacterial ribosomal protein bL35 family.

In Methylorubrum populi (strain ATCC BAA-705 / NCIMB 13946 / BJ001) (Methylobacterium populi), this protein is Large ribosomal subunit protein bL35.